Here is a 658-residue protein sequence, read N- to C-terminus: MRGCLQTVRWLTSAWQRPRSYSPLSRAAPCRFFNVSIPRNAQSRKPVSELERRIAAISIDRFRNFCIVAHVDHGKSTLSDRLLELTGTIQPGGNKQVLDKLDVERERGITVKAQTCTMLYNYRGEDYLLHLVDTPGHVDFRAEVSRSYASCGGALLLVDASQGVQAQTVANFYLAFAEGLKLVPVINKVDLPSADPDRALEQMANTFELDPKSAVLVSAKTGLNVEQLLPTVVEQIPAPVGDHTKPLRMLLVDSWYSTYKGVILLVRIFDGEVRAGDHVGSLATGLKYHVGEVGIMYPGQTAQSVLRAGQVGYIYFNPAMKRSQEAKVGDTYTKVGSEKLIEPLPGFEEPKSMVFVAAYPVDASDFPHLEDSINQLLLNDRSITLQKESSEALGAGFRLGFLGTLHCSVFEDRLRQEHGASIIITPPTVPFKVIWKDGKEEIITNPALFPEEDALRAKVVELQEPFVLATLTFPEEYLGRVIELCESNRGEQKSLEFFTATQVILKYELPLAQLVDDFFGKLKGSTKGYASLDYEESGWRRSSIAKLQLLVNKVPVDAVSRVVHSSQAQKLGRLWVSKFKEHVDRQMFEVVIQAAVGRNIVARETIKPFRKDVLQKLHAADVTRRRKLLEKQKEGRKKLKAVGNVVIEHKAFQAFLAK.

The N-terminal 40 residues, 1–40 (MRGCLQTVRWLTSAWQRPRSYSPLSRAAPCRFFNVSIPRN), are a transit peptide targeting the mitochondrion. The tr-type G domain occupies 60 to 240 (DRFRNFCIVA…TVVEQIPAPV (181 aa)). GTP is bound by residues 69-76 (AHVDHGKS), 133-137 (DTPGH), and 187-190 (NKVD).

This sequence belongs to the TRAFAC class translation factor GTPase superfamily. Classic translation factor GTPase family. LepA subfamily.

The protein resides in the mitochondrion inner membrane. The catalysed reaction is GTP + H2O = GDP + phosphate + H(+). Functionally, promotes mitochondrial protein synthesis. May act as a fidelity factor of the translation reaction, by catalyzing a one-codon backward translocation of tRNAs on improperly translocated ribosomes. Binds to mitochondrial ribosomes in a GTP-dependent manner. The chain is Translation factor GUF1, mitochondrial from Paracoccidioides lutzii (strain ATCC MYA-826 / Pb01) (Paracoccidioides brasiliensis).